The chain runs to 711 residues: Toxin RTX-III translocation ATP-binding protein (711 aa).

The Peptidase C39 domain occupies 1-129; it reads MESQMPFNEK…EIFQGGMILI (129 aa). His87 is a catalytic residue. Positions 158–440 constitute an ABC transmembrane type-1 domain; it reads FVETIIVSIF…LAQLWQDFQQ (283 aa). 5 consecutive transmembrane segments (helical) span residues 162 to 182, 195 to 215, 273 to 293, 299 to 319, and 392 to 412; these read IIVS…FQVV, LNVI…LSGL, ALTS…MWYY, IVIL…SPIL, and VMII…LSIG. Residues 472–707 enclose the ABC transporter domain; sequence IAFKHIRFRY…ENGLYYYLNQ (236 aa). Residue 506 to 513 participates in ATP binding; sequence GRSGSGKS.

It belongs to the ABC transporter superfamily. Protein-1 exporter (TC 3.A.1.109) family. Homodimer.

The protein localises to the cell membrane. Involved in the transport of the toxin RTX-III. This is Toxin RTX-III translocation ATP-binding protein (apxIIIB) from Actinobacillus pleuropneumoniae (Haemophilus pleuropneumoniae).